Here is a 312-residue protein sequence, read N- to C-terminus: Malate dehydrogenase (312 aa).

NAD(+) is bound by residues Gly-12–Gly-17 and Asp-36. Residues Arg-87 and Arg-93 each coordinate substrate. NAD(+) is bound by residues Asn-100 and Leu-123–Asn-125. Position 125 (Asn-125) interacts with substrate. Ser-149 bears the Phosphoserine mark. Arg-156 provides a ligand contact to substrate. His-180 acts as the Proton acceptor in catalysis.

Belongs to the LDH/MDH superfamily. MDH type 3 family.

It carries out the reaction (S)-malate + NAD(+) = oxaloacetate + NADH + H(+). Its function is as follows. Catalyzes the reversible oxidation of malate to oxaloacetate. The chain is Malate dehydrogenase from Bacillus cereus (strain ATCC 14579 / DSM 31 / CCUG 7414 / JCM 2152 / NBRC 15305 / NCIMB 9373 / NCTC 2599 / NRRL B-3711).